A 432-amino-acid polypeptide reads, in one-letter code: Adenosine 3'-phospho 5'-phosphosulfate transporter 1 (432 aa).

Transmembrane regions (helical) follow at residues 5-25 (WWAV…ETPE), 40-60 (VVNA…VQYF), 109-129 (ALKL…WGVL), 154-174 (FLVL…CVLC), 238-258 (WEYL…LSSG), 265-285 (PATT…DSFT), 299-319 (SVQM…GSLL), 353-373 (LFIF…IMTL), and 387-407 (GHTV…ALLL). Ser-427 carries the post-translational modification Phosphoserine.

It belongs to the nucleotide-sugar transporter family. SLC35B subfamily. As to expression, highly expressed in the placenta, pancreas, mammary gland and skeletal muscle. Weakly or not expressed in colon, heart and prostate. Expressed in the brain, predominantly in frontal lobe gray matter, subcortical frontal white matter and cerebellum.

The protein localises to the golgi apparatus membrane. It catalyses the reaction 3'-phosphoadenylyl sulfate(in) + adenosine 3',5'-bisphosphate(out) = 3'-phosphoadenylyl sulfate(out) + adenosine 3',5'-bisphosphate(in). Functionally, probably functions as a 3'-phosphoadenylyl sulfate:adenosine 3',5'-bisphosphate antiporter at the Golgi membranes. Mediates the transport from the cytosol into the lumen of the Golgi of 3'-phosphoadenylyl sulfate/adenosine 3'-phospho 5'-phosphosulfate (PAPS), a universal sulfuryl donor for sulfation events that take place in that compartment. This chain is Adenosine 3'-phospho 5'-phosphosulfate transporter 1, found in Homo sapiens (Human).